The chain runs to 350 residues: Protein RecA (350 aa).

Residue 68-75 (GPESSGKT) participates in ATP binding.

This sequence belongs to the RecA family.

It localises to the cytoplasm. Its function is as follows. Can catalyze the hydrolysis of ATP in the presence of single-stranded DNA, the ATP-dependent uptake of single-stranded DNA by duplex DNA, and the ATP-dependent hybridization of homologous single-stranded DNAs. It interacts with LexA causing its activation and leading to its autocatalytic cleavage. In Symbiobacterium thermophilum (strain DSM 24528 / JCM 14929 / IAM 14863 / T), this protein is Protein RecA.